The primary structure comprises 542 residues: Membrane protein insertase YidC (542 aa).

5 consecutive transmembrane segments (helical) span residues 7–27 (LLVM…QQDF), 338–358 (FALL…IIGV), 417–437 (MGGC…YWTF), 455–475 (LSAQ…MFLL), and 494–514 (FMPV…VLYW).

Belongs to the OXA1/ALB3/YidC family. Type 1 subfamily. As to quaternary structure, interacts with the Sec translocase complex via SecD. Specifically interacts with transmembrane segments of nascent integral membrane proteins during membrane integration.

It is found in the cell inner membrane. In terms of biological role, required for the insertion and/or proper folding and/or complex formation of integral membrane proteins into the membrane. Involved in integration of membrane proteins that insert both dependently and independently of the Sec translocase complex, as well as at least some lipoproteins. Aids folding of multispanning membrane proteins. The polypeptide is Membrane protein insertase YidC (Actinobacillus pleuropneumoniae serotype 7 (strain AP76)).